A 775-amino-acid polypeptide reads, in one-letter code: Coiled-coil domain-containing protein 33 (775 aa).

Disordered regions lie at residues 1 to 23 (MGRQKTKVPEEPQDRLDTSLDPY) and 68 to 87 (EANNHSPQARTSVTSEPTRA). Positions 7-18 (KVPEEPQDRLDT) are enriched in basic and acidic residues. The C2 domain maps to 12 to 141 (PQDRLDTSLD…RAFHPYHFEL (130 aa)). Residues 71–84 (NHSPQARTSVTSEP) are compositionally biased toward polar residues. 2 coiled-coil regions span residues 414 to 561 (VEMN…ERKE) and 672 to 715 (DKFS…LQEQ). Positions 735–775 (RSQGSTTPRQNLKDEGYPGNIERPLQTHLTPGTRDIRHHLR) are disordered.

In Rattus norvegicus (Rat), this protein is Coiled-coil domain-containing protein 33 (Ccdc33).